Here is a 521-residue protein sequence, read N- to C-terminus: Glutamate--cysteine ligase (521 aa).

Belongs to the glutamate--cysteine ligase type 1 family. Type 1 subfamily.

It carries out the reaction L-cysteine + L-glutamate + ATP = gamma-L-glutamyl-L-cysteine + ADP + phosphate + H(+). It functions in the pathway sulfur metabolism; glutathione biosynthesis; glutathione from L-cysteine and L-glutamate: step 1/2. In Aliivibrio fischeri (strain MJ11) (Vibrio fischeri), this protein is Glutamate--cysteine ligase.